Consider the following 95-residue polypeptide: Protein TusB (95 aa).

It belongs to the DsrH/TusB family. Heterohexamer, formed by a dimer of trimers. The hexameric TusBCD complex contains 2 copies each of TusB, TusC and TusD. The TusBCD complex interacts with TusE.

The protein resides in the cytoplasm. Its function is as follows. Part of a sulfur-relay system required for 2-thiolation of 5-methylaminomethyl-2-thiouridine (mnm(5)s(2)U) at tRNA wobble positions. The sequence is that of Protein TusB from Erwinia tasmaniensis (strain DSM 17950 / CFBP 7177 / CIP 109463 / NCPPB 4357 / Et1/99).